A 470-amino-acid polypeptide reads, in one-letter code: Membrane-bound lytic murein transglycosylase F (470 aa).

Residues 1 to 24 (MPSLKTKGAAGKFASLLLVLALSA) form the signal peptide. The interval 25-262 (CSRPAPPPET…RALERYFGHV (238 aa)) is non-LT domain. The interval 263-470 (KRLGSSDILG…RGEDGLPPPG (208 aa)) is LT domain. Residue Glu-309 is part of the active site.

This sequence in the N-terminal section; belongs to the bacterial solute-binding protein 3 family. In the C-terminal section; belongs to the transglycosylase Slt family.

Its subcellular location is the cell outer membrane. It catalyses the reaction Exolytic cleavage of the (1-&gt;4)-beta-glycosidic linkage between N-acetylmuramic acid (MurNAc) and N-acetylglucosamine (GlcNAc) residues in peptidoglycan, from either the reducing or the non-reducing ends of the peptidoglycan chains, with concomitant formation of a 1,6-anhydrobond in the MurNAc residue.. Functionally, murein-degrading enzyme that degrades murein glycan strands and insoluble, high-molecular weight murein sacculi, with the concomitant formation of a 1,6-anhydromuramoyl product. Lytic transglycosylases (LTs) play an integral role in the metabolism of the peptidoglycan (PG) sacculus. Their lytic action creates space within the PG sacculus to allow for its expansion as well as for the insertion of various structures such as secretion systems and flagella. The chain is Membrane-bound lytic murein transglycosylase F from Thiobacillus denitrificans (strain ATCC 25259 / T1).